Consider the following 260-residue polypeptide: Isopentenyl phosphate kinase (260 aa).

An ATP-binding site is contributed by 6 to 10 (KLGGS). Position 55 (glycine 55) interacts with substrate. Glycine 56 is a binding site for ATP. Substrate is bound by residues histidine 60 and glycine 159. Positions 180, 217, and 221 each coordinate ATP.

Belongs to the isopentenyl phosphate kinase family. As to quaternary structure, homodimer.

It carries out the reaction isopentenyl phosphate + ATP = isopentenyl diphosphate + ADP. Catalyzes the formation of isopentenyl diphosphate (IPP), the building block of all isoprenoids. Has no activity with farnesyl phosphate. The polypeptide is Isopentenyl phosphate kinase (Methanocaldococcus jannaschii (strain ATCC 43067 / DSM 2661 / JAL-1 / JCM 10045 / NBRC 100440) (Methanococcus jannaschii)).